The chain runs to 290 residues: 4-hydroxy-tetrahydrodipicolinate synthase (290 aa).

Pyruvate is bound at residue S44. Catalysis depends on Y132, which acts as the Proton donor/acceptor. K161 functions as the Schiff-base intermediate with substrate in the catalytic mechanism. V202 contacts pyruvate.

The protein belongs to the DapA family. As to quaternary structure, homotetramer; dimer of dimers.

The protein resides in the cytoplasm. It carries out the reaction L-aspartate 4-semialdehyde + pyruvate = (2S,4S)-4-hydroxy-2,3,4,5-tetrahydrodipicolinate + H2O + H(+). The protein operates within amino-acid biosynthesis; L-lysine biosynthesis via DAP pathway; (S)-tetrahydrodipicolinate from L-aspartate: step 3/4. Its function is as follows. Catalyzes the condensation of (S)-aspartate-beta-semialdehyde [(S)-ASA] and pyruvate to 4-hydroxy-tetrahydrodipicolinate (HTPA). This is 4-hydroxy-tetrahydrodipicolinate synthase from Hydrogenobaculum sp. (strain Y04AAS1).